A 300-amino-acid polypeptide reads, in one-letter code: uncharacterized protein (300 aa).

This sequence belongs to the chlamydial CPn_0593/CT_474/TC_0759 family.

This is an uncharacterized protein from Chlamydia muridarum (strain MoPn / Nigg).